A 40-amino-acid polypeptide reads, in one-letter code: Dolichyl-diphosphooligosaccharide--protein glycosyltransferase subunit 4 (40 aa).

Topologically, residues 1-4 (MITD) are lumenal. Residues 5–25 (VQLAIFSNVLGVFLFLLVVAY) traverse the membrane as a helical segment. The Cytoplasmic portion of the chain corresponds to 26 to 40 (HYINANTGKPSAKAK).

It belongs to the OST4 family. As to quaternary structure, component of the oligosaccharyltransferase (OST) complex.

Its subcellular location is the endoplasmic reticulum membrane. Subunit of the oligosaccharyl transferase (OST) complex that catalyzes the initial transfer of a defined glycan (Glc(3)Man(9)GlcNAc(2) in eukaryotes) from the lipid carrier dolichol-pyrophosphate to an asparagine residue within an Asn-X-Ser/Thr consensus motif in nascent polypeptide chains, the first step in protein N-glycosylation. N-glycosylation occurs cotranslationally and the complex associates with the Sec61 complex at the channel-forming translocon complex that mediates protein translocation across the endoplasmic reticulum (ER). All subunits are required for a maximal enzyme activity. This is Dolichyl-diphosphooligosaccharide--protein glycosyltransferase subunit 4 from Drosophila erecta (Fruit fly).